Here is a 522-residue protein sequence, read N- to C-terminus: Zinc finger and BTB domain-containing protein 18 (522 aa).

The BTB domain maps to 24 to 91; that stretch reads CDCTVLVGDA…MYEGKLQFKD (68 aa). Over residues 121–143 the composition is skewed to basic and acidic residues; the sequence is ATTEADSTKKEEDASSCSDKVES. The disordered stretch occupies residues 121–166; the sequence is ATTEADSTKKEEDASSCSDKVESLSDGSSHMAGDLPSDEDEGEDDK. A Phosphoserine modification is found at Ser157. A Glycyl lysine isopeptide (Lys-Gly) (interchain with G-Cter in SUMO2) cross-link involves residue Lys273. An interaction with DNMT3A region spans residues 310–427; sequence EPAHLAPLRE…TFSCMYTLKR (118 aa). 4 consecutive C2H2-type zinc fingers follow at residues 370–392, 410–432, 438–460, and 466–489; these read FMCPLCNKVFPSPHILQIHLSTH, PTCSLCGKTFSCMYTLKRHERTH, YTCTQCGKSFQYSHNLSRHAVVH, and HACKWCERRFTQSGDLYRHIRKFH. Residues Ser516 and Ser517 each carry the phosphoserine modification.

This sequence belongs to the krueppel C2H2-type zinc-finger protein family. ZBTB18 subfamily. As to quaternary structure, interacts with DNMT3A.

It is found in the nucleus. Transcriptional repressor that plays a role in various developmental processes such as myogenesis and brain development. Specifically binds the consensus DNA sequence 5'-[AC]ACATCTG[GT][AC]-3' which contains the E box core, and acts by recruiting chromatin remodeling multiprotein complexes. Plays a key role in myogenesis by directly repressing the expression of ID2 and ID3, 2 inhibitors of skeletal myogenesis. Also involved in controlling cell division of progenitor cells and regulating the survival of postmitotic cortical neurons. May also play a role in the organization of chromosomes in the nucleus. The protein is Zinc finger and BTB domain-containing protein 18 (Zbtb18) of Rattus norvegicus (Rat).